Here is a 442-residue protein sequence, read N- to C-terminus: Glutamate-1-semialdehyde 2,1-aminomutase (442 aa).

Lysine 282 is subject to N6-(pyridoxal phosphate)lysine.

This sequence belongs to the class-III pyridoxal-phosphate-dependent aminotransferase family. HemL subfamily. As to quaternary structure, homodimer. The cofactor is pyridoxal 5'-phosphate.

It localises to the cytoplasm. It carries out the reaction (S)-4-amino-5-oxopentanoate = 5-aminolevulinate. It participates in porphyrin-containing compound metabolism; protoporphyrin-IX biosynthesis; 5-aminolevulinate from L-glutamyl-tRNA(Glu): step 2/2. This is Glutamate-1-semialdehyde 2,1-aminomutase from Polaromonas sp. (strain JS666 / ATCC BAA-500).